A 204-amino-acid polypeptide reads, in one-letter code: Kunitz type trypsin inhibitor 106 (204 aa).

Positions 1 to 26 (MSMRLSIRTLIILAHVCLFITTTTIA) are cleaved as a signal peptide. Asparagine 62 carries N-linked (GlcNAc...) asparagine glycosylation. Cysteines 65 and 112 form a disulfide. N-linked (GlcNAc...) asparagine glycosylation is present at asparagine 141. 2 cysteine pairs are disulfide-bonded: cysteine 164/cysteine 176 and cysteine 169/cysteine 172.

It belongs to the protease inhibitor I3 (leguminous Kunitz-type inhibitor) family. As to quaternary structure, interacts with SCP1 and CP. In terms of tissue distribution, expressed at low levels in non-mycorrhizal roots.

Its subcellular location is the secreted. It localises to the extracellular space. The protein resides in the apoplast. Its function is as follows. Protease inhibitor that, together with SCP1, controls mycorrhiza establishment and arbuscule development during root colonization by arbuscular mycorrhizal (AM) fungi (e.g. Rhizophagus irregularis), probably by degrading SCP1 in the apoplast of the periarbuscular region. In Medicago truncatula (Barrel medic), this protein is Kunitz type trypsin inhibitor 106.